We begin with the raw amino-acid sequence, 545 residues long: DNA mismatch repair protein MutL (545 aa).

Residues 516-545 (GRRSGARGGGEARPRPQEESFPEAPLPREP) form a disordered region.

This sequence belongs to the DNA mismatch repair MutL/HexB family.

In terms of biological role, this protein is involved in the repair of mismatches in DNA. It is required for dam-dependent methyl-directed DNA mismatch repair. May act as a 'molecular matchmaker', a protein that promotes the formation of a stable complex between two or more DNA-binding proteins in an ATP-dependent manner without itself being part of a final effector complex. The sequence is that of DNA mismatch repair protein MutL from Thermus thermophilus (strain ATCC BAA-163 / DSM 7039 / HB27).